Consider the following 427-residue polypeptide: Extracellular superoxide dismutase [Cu-Zn] 2 (427 aa).

Residues 1 to 20 form the signal peptide; that stretch reads MNKLIISLLIVLSAISIISA. At 21–406 the chain is on the extracellular side; the sequence is DYQYGYCKFG…PTETSQPGTS (386 aa). Asn-38, Asn-57, Asn-81, Asn-190, and Asn-218 each carry an N-linked (GlcNAc...) asparagine glycan. His-257, His-259, and His-275 together coordinate Cu cation. His-275 and His-283 together coordinate Zn(2+). A glycan (N-linked (GlcNAc...) asparagine) is linked at Asn-288. His-292 and Asp-295 together coordinate Zn(2+). His-331 is a Cu cation binding site. Residue Asn-376 is glycosylated (N-linked (GlcNAc...) asparagine). Positions 381-404 are disordered; sequence GESTIEPSPTPSTTPTPTETSQPG. The span at 395–404 shows a compositional bias: low complexity; sequence PTPTETSQPG. The chain crosses the membrane as a helical span at residues 407-426; that stretch reads SYLAPFFVLILSSLISVILI. Residue Leu-427 is a topological domain, cytoplasmic.

It belongs to the Cu-Zn superoxide dismutase family. The cofactor is Cu cation. Requires Zn(2+) as cofactor.

Its subcellular location is the cell membrane. It catalyses the reaction 2 superoxide + 2 H(+) = H2O2 + O2. Protect the extracellular space from toxic effect of reactive oxygen intermediates by converting superoxyde radicals into hydrogen peroxyde and oxygen. The polypeptide is Extracellular superoxide dismutase [Cu-Zn] 2 (sodB) (Dictyostelium discoideum (Social amoeba)).